Consider the following 389-residue polypeptide: uncharacterized protein (389 aa).

The signal sequence occupies residues 1 to 23; the sequence is MHFAKLGAIGLLGSIICAYAASA.

It belongs to the IUNH family.

The protein resides in the endoplasmic reticulum lumen. This is an uncharacterized protein from Schizosaccharomyces pombe (strain 972 / ATCC 24843) (Fission yeast).